Here is a 681-residue protein sequence, read N- to C-terminus: Probable glutamate carboxypeptidase LAMP1 (681 aa).

The Cytoplasmic portion of the chain corresponds to Met1–Ser6. Residues Leu7–Ser24 form a helical; Signal-anchor for type II membrane protein membrane-spanning segment. Residues Pro25–Ile681 lie on the Extracellular side of the membrane. N-linked (GlcNAc...) asparagine glycosylation is found at Asn42, Asn140, Asn166, and Asn299. The segment at Ser241–Leu527 is catalytic. Zn(2+) contacts are provided by His333 and Asp343. The active-site Nucleophile is Glu380. Positions 381 and 409 each coordinate Zn(2+). A glycan (N-linked (GlcNAc...) asparagine) is linked at Asn441. His493 serves as a coordination point for Zn(2+). A glycan (N-linked (GlcNAc...) asparagine) is linked at Asn536.

It belongs to the peptidase M28 family. M28B subfamily. Zn(2+) is required as a cofactor.

Its subcellular location is the endoplasmic reticulum membrane. It catalyses the reaction Release of an unsubstituted, C-terminal glutamyl residue, typically from Ac-Asp-Glu or folylpoly-gamma-glutamates.. In terms of biological role, acts in association with AMP1 to suppress ectopic stem cell niche formation in the shoot apical meristem (SAM) independently of cytokinin signaling pathway. The protein is Probable glutamate carboxypeptidase LAMP1 of Arabidopsis thaliana (Mouse-ear cress).